Reading from the N-terminus, the 201-residue chain is Recombination protein RecR (201 aa).

A C4-type zinc finger spans residues 60-75 (CSCCGNVDTSDPCTIC). A Toprim domain is found at 83–178 (ATLIVVEDVS…RVTRLAHGVP (96 aa)).

It belongs to the RecR family.

In terms of biological role, may play a role in DNA repair. It seems to be involved in an RecBC-independent recombinational process of DNA repair. It may act with RecF and RecO. This Brucella abortus biovar 1 (strain 9-941) protein is Recombination protein RecR.